We begin with the raw amino-acid sequence, 102 residues long: Small ribosomal subunit protein uS10 (102 aa).

The protein belongs to the universal ribosomal protein uS10 family. In terms of assembly, part of the 30S ribosomal subunit.

Involved in the binding of tRNA to the ribosomes. The chain is Small ribosomal subunit protein uS10 from Exiguobacterium sp. (strain ATCC BAA-1283 / AT1b).